An 87-amino-acid polypeptide reads, in one-letter code: Scorpine-like peptide Tco 41.46-2 (87 aa).

The N-terminal stretch at 1–19 (MERKLALLLFLGMVTLASC) is a signal peptide. The 35-residue stretch at 53 to 87 (QFGCPAYEGYCNNHCQDIERKDGECHGFKCKCAKD) folds into the BetaSPN-type CS-alpha/beta domain. 3 cysteine pairs are disulfide-bonded: Cys-56-Cys-77, Cys-63-Cys-82, and Cys-67-Cys-84.

The protein belongs to the long chain scorpion toxin family. Class 1 subfamily. In terms of tissue distribution, expressed by the venom gland.

Its subcellular location is the secreted. Functionally, may have antibacterial activity. In terms of biological role, inhibits voltage-gated potassium channel. Does not induce hemolytic activity, lactate dehydrogenase (LDH) release from mast cells, mast cell degranulation, and antimicrobial effects. In vivo, injection into mice causes moderate edema formation, but induces very weak or no change in nociceptive sensibility. It also reduces mice locomotion, suggesting an increase in anxiety, but causes no alteration in rearing (standing on hind limbs). This is Scorpine-like peptide Tco 41.46-2 from Tityus costatus (Brazilian scorpion).